A 294-amino-acid polypeptide reads, in one-letter code: Elongation factor Ts (294 aa).

The tract at residues threonine 81–valine 84 is involved in Mg(2+) ion dislocation from EF-Tu.

This sequence belongs to the EF-Ts family.

It is found in the cytoplasm. Associates with the EF-Tu.GDP complex and induces the exchange of GDP to GTP. It remains bound to the aminoacyl-tRNA.EF-Tu.GTP complex up to the GTP hydrolysis stage on the ribosome. In Mycoplasmopsis pulmonis (strain UAB CTIP) (Mycoplasma pulmonis), this protein is Elongation factor Ts (tsf).